Here is a 252-residue protein sequence, read N- to C-terminus: O-methyltransferase hkm8 (252 aa).

Residues Glu-73, 75–76 (GT), Ser-81, and Asp-100 each bind S-adenosyl-L-methionine.

The protein belongs to the class I-like SAM-binding methyltransferase superfamily. Cation-dependent O-methyltransferase family.

Its pathway is secondary metabolite biosynthesis. In terms of biological role, O-methyltransferase; part of the gene cluster that mediates the biosynthesis of hancockiamides, an unusual new family of N-cinnamoylated piperazines. The NRPS hkm10 and the NmrA-like reductase hkm9 are proposed to convert two molecules of L-Phe to the intermediary piperazine called xenocockiamide A. Xenocockiamide A is then converted to hancockiamide D via a series of hydroxylations and O-methylations. The tyrosinase hkm6 may catalyze an aromatic hydroxylation, then the 2-oxoglutarate-dependent Fe(II) dioxygenase hkm4 and the FAD-dependent phenol hydroxylase hkm7 may catalyze consecutive hydroxylations to install 2 more hydroxy groups, and the methyltransferase hkm8 probably catalyzes two methylations using 2 molecules of S-adenosyl-L-methionine (SAM). The NRPS hkm11 activates and transfers trans-cinnamate supplied by the PAL hkm12 to hancockiamide D and produces hancockiamide A. NRPS Hkm11 has the flexibility to tolerate the bulky hancockiamide G as a substrate and the absence of the acetyl-transferase hkm3 opens up the opportunity for hkm11 to introduce a second N-cinnamoyl moiety. The cytochrome P450 monooxygenase hkm5 catalyzes the methylenedioxy bridge formation, converting hancockiamide A into hancockiamide G. Hkm5 can also convert hancockiamide B into hancockiamide C, and hancockiamide D into hancockiamide H. The N-acetyltransferase hkm3 finally transfers an acetyl group to 1-N of piperazine, converting hancockiamide A into hancockiamide B and hancockiamide G into hancockiamide C. This Aspergillus hancockii protein is O-methyltransferase hkm8.